The sequence spans 914 residues: Protein translocase subunit SecA (914 aa).

ATP is bound by residues glutamine 86, 104 to 108 (GEGKT), and aspartate 512. Zn(2+) contacts are provided by cysteine 898, cysteine 900, cysteine 909, and histidine 910.

It belongs to the SecA family. Monomer and homodimer. Part of the essential Sec protein translocation apparatus which comprises SecA, SecYEG and auxiliary proteins SecDF-YajC and YidC. It depends on Zn(2+) as a cofactor.

Its subcellular location is the cell inner membrane. It localises to the cytoplasm. The enzyme catalyses ATP + H2O + cellular proteinSide 1 = ADP + phosphate + cellular proteinSide 2.. Its function is as follows. Part of the Sec protein translocase complex. Interacts with the SecYEG preprotein conducting channel. Has a central role in coupling the hydrolysis of ATP to the transfer of proteins into and across the cell membrane, serving both as a receptor for the preprotein-SecB complex and as an ATP-driven molecular motor driving the stepwise translocation of polypeptide chains across the membrane. This chain is Protein translocase subunit SecA, found in Bordetella petrii (strain ATCC BAA-461 / DSM 12804 / CCUG 43448).